Here is a 402-residue protein sequence, read N- to C-terminus: Oxysterol-binding protein 12 (402 aa).

Residues 333-366 (NNNNDKETAEEKAKIEEKQRKEESERREKGILWE) are disordered. The segment covering 336-366 (NDKETAEEKAKIEEKQRKEESERREKGILWE) has biased composition (basic and acidic residues).

It belongs to the OSBP family.

The sequence is that of Oxysterol-binding protein 12 (osbL) from Dictyostelium discoideum (Social amoeba).